A 231-amino-acid polypeptide reads, in one-letter code: RING finger protein 141 (231 aa).

Gly2 carries N-myristoyl glycine lipidation. The segment at 156–193 (CCICMDGRADLILPCAHSFCQKCIDKWSDRHRNCPICR) adopts an RING-type zinc-finger fold.

The protein resides in the membrane. Functionally, may be involved in spermatogenesis. The chain is RING finger protein 141 (RNF141) from Canis lupus familiaris (Dog).